A 964-amino-acid chain; its full sequence is Insulin receptor substrate 1 (964 aa).

The PH domain occupies G8–R109. The IRS-type PTB domain occupies Y122 to N236. The tract at residues L249–I268 is disordered. A phosphoserine mark is found at S286, S287, and S342. The residue at position 410 (Y410) is a Phosphotyrosine; by INSR. Residues Y410 to M413 carry the YXXM motif 1 motif. The tract at residues A527–L560 is disordered. Residues S528–L560 are compositionally biased toward polar residues. Residue S554 is modified to Phosphoserine. A YXXM motif 2 motif is present at residues Y640 to M643. Basic and acidic residues predominate over residues E698–S712. The segment at E698 to H735 is disordered. Over residues N713–E729 the composition is skewed to polar residues. Phosphotyrosine; by INSR is present on Y907. The segment at A921 to T964 is disordered. 2 positions are modified to phosphoserine: S928 and S931. Y944 carries the post-translational modification Phosphotyrosine; by INSR. The segment covering S952–T964 has biased composition (low complexity).

Bindings to phosphatidylinositol 3-kinase and SHP2.

Functionally, activates phosphatidylinositol 3-kinase when bound to the regulatory p85 subunit. May mediate the control of various cellular processes by insulin-like peptides. When phosphorylated by the insulin receptor binds specifically to various cellular proteins containing SH2 domains. Involved in control of cell proliferation, cell size, and body and organ growth throughout development. Also has a role in a signaling pathway controlling the physiological response required to endure periods of low nutrient conditions. Insulin/insulin-like growth factor (IGF) signaling pathway has a role in regulating aging and is necessary in the ovary for vitellogenic maturation. This Drosophila sechellia (Fruit fly) protein is Insulin receptor substrate 1.